We begin with the raw amino-acid sequence, 124 residues long: Ribonuclease pancreatic (124 aa).

The tract at residues R1 to P23 is disordered. 2 residues coordinate substrate: K7 and R10. Residue H12 is the Proton acceptor of the active site. The span at D14–P23 shows a compositional bias: polar residues. Disulfide bonds link C26-C84, C40-C95, C58-C110, and C65-C72. Residues K41–T45 and K66 each bind substrate. N76 carries an N-linked (GlcNAc...) asparagine; partial glycan. A substrate-binding site is contributed by R85. Catalysis depends on H119, which acts as the Proton donor.

It belongs to the pancreatic ribonuclease family. As to quaternary structure, monomer. Interacts with and forms tight 1:1 complexes with RNH1. Dimerization of two such complexes may occur. Interaction with RNH1 inhibits this protein. In terms of tissue distribution, pancreas.

Its subcellular location is the secreted. The catalysed reaction is an [RNA] containing cytidine + H2O = an [RNA]-3'-cytidine-3'-phosphate + a 5'-hydroxy-ribonucleotide-3'-[RNA].. The enzyme catalyses an [RNA] containing uridine + H2O = an [RNA]-3'-uridine-3'-phosphate + a 5'-hydroxy-ribonucleotide-3'-[RNA].. In terms of biological role, endonuclease that catalyzes the cleavage of RNA on the 3' side of pyrimidine nucleotides. Acts on single-stranded and double-stranded RNA. The sequence is that of Ribonuclease pancreatic (RNASE1) from Balaenoptera acutorostrata (Common minke whale).